A 914-amino-acid polypeptide reads, in one-letter code: DNA mismatch repair protein MutS (914 aa).

The disordered stretch occupies residues 1–25 (MDKKNDHKNNLIPQPASSFASSQER). The span at 11–25 (LIPQPASSFASSQER) shows a compositional bias: polar residues. 662 to 669 (GPNMGGKS) contributes to the ATP binding site.

The protein belongs to the DNA mismatch repair MutS family.

Its function is as follows. This protein is involved in the repair of mismatches in DNA. It is possible that it carries out the mismatch recognition step. This protein has a weak ATPase activity. The polypeptide is DNA mismatch repair protein MutS (Bartonella tribocorum (strain CIP 105476 / IBS 506)).